Consider the following 429-residue polypeptide: Histidine--tRNA ligase (429 aa).

This sequence belongs to the class-II aminoacyl-tRNA synthetase family. Homodimer.

Its subcellular location is the cytoplasm. The enzyme catalyses tRNA(His) + L-histidine + ATP = L-histidyl-tRNA(His) + AMP + diphosphate + H(+). This chain is Histidine--tRNA ligase, found in Pseudomonas putida (strain W619).